The primary structure comprises 160 residues: Transcription antitermination protein NusB (160 aa).

This sequence belongs to the NusB family.

Its function is as follows. Involved in transcription antitermination. Required for transcription of ribosomal RNA (rRNA) genes. Binds specifically to the boxA antiterminator sequence of the ribosomal RNA (rrn) operons. The chain is Transcription antitermination protein NusB from Rhizobium etli (strain ATCC 51251 / DSM 11541 / JCM 21823 / NBRC 15573 / CFN 42).